Here is a 98-residue protein sequence, read N- to C-terminus: NADH-ubiquinone oxidoreductase chain 4L (98 aa).

Transmembrane regions (helical) follow at residues 1–21, 29–49, and 61–81; these read MTMV…GLLM, SLLC…VTIL, and IVLL…LVMV.

It belongs to the complex I subunit 4L family. In terms of assembly, core subunit of respiratory chain NADH dehydrogenase (Complex I) which is composed of 45 different subunits.

It localises to the mitochondrion inner membrane. The enzyme catalyses a ubiquinone + NADH + 5 H(+)(in) = a ubiquinol + NAD(+) + 4 H(+)(out). In terms of biological role, core subunit of the mitochondrial membrane respiratory chain NADH dehydrogenase (Complex I) which catalyzes electron transfer from NADH through the respiratory chain, using ubiquinone as an electron acceptor. Part of the enzyme membrane arm which is embedded in the lipid bilayer and involved in proton translocation. This Monachus monachus (Mediterranean monk seal) protein is NADH-ubiquinone oxidoreductase chain 4L (MT-ND4L).